A 120-amino-acid chain; its full sequence is Protein CcdB (120 aa).

The Response regulatory domain maps to 3–118 (RVLVVDDAKF…KVLEAVSRVM (116 aa)). The residue at position 53 (Asp-53) is a 4-aspartylphosphate.

This Bacillus subtilis (strain 168) protein is Protein CcdB (ccdB).